Reading from the N-terminus, the 937-residue chain is MALLLEGTSLARKVREELREQISSIKSVDPYFNVSLKIIQVGGREDSNVYVRMKTRAANEAGISCEHVNFPEDITEYDLLLAIKGFNEDPTVHGIIVQLPLPAHINEQIITEAVAPEKDVDGFCETNLGKLTKREGQPLFTACTPKGIMCILKHYGINVQGKHAVVIGRSNIVGRPMSILLEKANATVTLCHSKTESIADIVRTADIVVAAIGIPHFVKADWLKKGVVAIDVGINSIPDATKKSGYRLTGDIDFENAKEVASAITPVPGSVGPMTVAMLLQNVVESAVRFRKMSRKRKPTLLPLKLQTPVPSDIEIARSQTPKNIGDLASEIGIAKSELEFYGSHKAKVNLEILQRLAHRRDGHYVVVTGITPTPFGEGKSTLTAGLVQALSNLDKLAIACVRQPSQGPTFGIKGGAAGGGYSQFIPMEEFNLHLTGDIHAITAATNLLAAAIDTRMFHENTQSDAALYKRLTLVKGNKREFAPVMFRRLKKLGIDKTNPEELTEEEQRKFARLDIEPSTISWNRTLDVNDRFLRKITIGENPTEKGFTRQTGFDLSVASECMSVLALATDLKDMRERLGRMVVASNKSGEPVTADDLGVGGALTVLLKDAIKPTLMQTLEGTPALVHAGPFANISIGASSILADRIALKLAGTEVDEDAKKEAGYVVTEAGFASDIGMEKFFNIKCRTSGLKPDAIVIVATVQALKLHGGGPPVGPGKPIPEVYKREDVDLVRKGCANLAKHISNARKYGLPVVVAINKFSSDSPNEISAIREEALAAGATDAVDSNHWAEGGKGALGVARALINACENVDSEFRLLYDVHEPIEKKIEIIAKEMYGADGIELSPLAKERLETFTKQGYNNLPICIAKTQYSLSHDPDLKGAPTNFTVPIRDMRLSAGAGFIYPLAAAISTIPGLPTKPAYYNIDIAENGDIVGLS.

The segment at 1–309 (MALLLEGTSL…TLLPLKLQTP (309 aa)) is methylenetetrahydrofolate dehydrogenase and cyclohydrolase. Substrate is bound by residues 50–54 (YVRMK) and 97–99 (VQL). NADP(+) contacts are provided by residues 168-170 (GRS) and Ser-193. 268-272 (PGSVG) serves as a coordination point for substrate. The formyltetrahydrofolate synthetase stretch occupies residues 310 to 937 (VPSDIEIARS…AENGDIVGLS (628 aa)). 374 to 381 (TPFGEGKS) contacts ATP.

The protein in the N-terminal section; belongs to the tetrahydrofolate dehydrogenase/cyclohydrolase family. This sequence in the C-terminal section; belongs to the formate--tetrahydrofolate ligase family. As to quaternary structure, homodimer.

The protein resides in the cytoplasm. The catalysed reaction is (6R)-5,10-methylene-5,6,7,8-tetrahydrofolate + NADP(+) = (6R)-5,10-methenyltetrahydrofolate + NADPH. It carries out the reaction (6R)-5,10-methenyltetrahydrofolate + H2O = (6R)-10-formyltetrahydrofolate + H(+). The enzyme catalyses (6S)-5,6,7,8-tetrahydrofolate + formate + ATP = (6R)-10-formyltetrahydrofolate + ADP + phosphate. The protein operates within one-carbon metabolism; tetrahydrofolate interconversion. The protein is C-1-tetrahydrofolate synthase, cytoplasmic of Schizosaccharomyces pombe (strain 972 / ATCC 24843) (Fission yeast).